The primary structure comprises 101 residues: Small ribosomal subunit protein uS14 (101 aa).

The protein belongs to the universal ribosomal protein uS14 family. As to quaternary structure, part of the 30S ribosomal subunit. Contacts proteins S3 and S10.

Binds 16S rRNA, required for the assembly of 30S particles and may also be responsible for determining the conformation of the 16S rRNA at the A site. In Acinetobacter baylyi (strain ATCC 33305 / BD413 / ADP1), this protein is Small ribosomal subunit protein uS14.